The chain runs to 219 residues: Octanoyltransferase (219 aa).

Residues K24 to S212 form the BPL/LPL catalytic domain. Substrate-binding positions include R69–H76, S140–G142, and G153–A155. Catalysis depends on C171, which acts as the Acyl-thioester intermediate.

Belongs to the LipB family.

It localises to the cytoplasm. It carries out the reaction octanoyl-[ACP] + L-lysyl-[protein] = N(6)-octanoyl-L-lysyl-[protein] + holo-[ACP] + H(+). It functions in the pathway protein modification; protein lipoylation via endogenous pathway; protein N(6)-(lipoyl)lysine from octanoyl-[acyl-carrier-protein]: step 1/2. In terms of biological role, catalyzes the transfer of endogenously produced octanoic acid from octanoyl-acyl-carrier-protein onto the lipoyl domains of lipoate-dependent enzymes. Lipoyl-ACP can also act as a substrate although octanoyl-ACP is likely to be the physiological substrate. This is Octanoyltransferase from Leptospira borgpetersenii serovar Hardjo-bovis (strain JB197).